Here is a 513-residue protein sequence, read N- to C-terminus: Leucine-rich repeat-containing protein 24 (513 aa).

Residues Met1 to Ala20 form the signal peptide. The LRRNT domain maps to Ala21–Pro50. 6 LRR repeats span residues Gly51 to Pro72, Ala75 to Ala96, Arg99 to Gly120, Gln123 to His144, Arg147 to Gly168, and Ser171 to Pro192. The region spanning Asn204–Pro259 is the LRRCT domain. The Ig-like C2-type domain occupies Pro260–Leu361. A disulfide bridge links Cys281 with Cys345. N-linked (GlcNAc...) asparagine glycosylation is found at Asn334 and Asn363. Positions Ser365–Ala391 are disordered. A helical membrane pass occupies residues Ala406–Cys426.

It localises to the membrane. The chain is Leucine-rich repeat-containing protein 24 (LRRC24) from Homo sapiens (Human).